The sequence spans 528 residues: DEAD-box ATP-dependent RNA helicase 6 (528 aa).

Composition is skewed to low complexity over residues 1-15 and 65-80; these read MNNN…PPGI and QQYV…QQQQ. Residues 1–80 form a disordered region; it reads MNNNNNNRGR…GYPQQIQQQQ (80 aa). The short motif at 154-182 is the Q motif element; sequence NEFEDYFLKRDLLRGIYEKGFEKPSPIQE. In terms of domain architecture, Helicase ATP-binding spans 185–355; that stretch reads IPIALTGSDI…DRYLKKPYII (171 aa). 198-205 lines the ATP pocket; the sequence is AKNGTGKT. T260 carries the post-translational modification Phosphothreonine. The DEAD box motif lies at 303–306; the sequence is DEAD. A Helicase C-terminal domain is found at 365-525; sequence GVTQYYAFVE…PIPSLIDKAI (161 aa).

It belongs to the DEAD box helicase family. DDX6/DHH1 subfamily.

It localises to the cytoplasm. The protein localises to the P-body. The enzyme catalyses ATP + H2O = ADP + phosphate + H(+). In terms of biological role, ATP-dependent RNA helicase involved in mRNA turnover, and more specifically in mRNA decapping. In Arabidopsis thaliana (Mouse-ear cress), this protein is DEAD-box ATP-dependent RNA helicase 6 (RH6).